Consider the following 236-residue polypeptide: uncharacterized protein (236 aa).

The protein localises to the plastid. Its subcellular location is the chloroplast. This is an uncharacterized protein from Chlorella vulgaris (Green alga).